We begin with the raw amino-acid sequence, 156 residues long: Protein FAM162A (156 aa).

Positions 37–57 (TNGFCSKPQESPKPPDQHTYS) are disordered. The interval 78 to 104 (RFKKEDEIPETVSFEMLDAAKNKVRVK) is required for proapoptotic activity. A helical membrane pass occupies residues 105 to 122 (ISYVMIALTVAGCVLMVI).

This sequence belongs to the UPF0389 family. In terms of assembly, interacts with HSP90AB1; HSP90AB1 is essential for FAM162A mitochondrial localization and pro-apoptotic activity. Interacts with VDAC2; the interaction is probably involved in inducing mitochondrial permeability transition.

It localises to the mitochondrion membrane. Proposed to be involved in regulation of apoptosis; the exact mechanism may differ between cell types/tissues. May be involved in hypoxia-induced cell death of transformed cells implicating cytochrome C release and caspase activation (such as CASP9) and inducing mitochondrial permeability transition. May be involved in hypoxia-induced cell death of neuronal cells probably by promoting release of AIFM1 from mitochondria to cytoplasm and its translocation to the nucleus; however, the involvement of caspases has been reported conflictingly. In Bos taurus (Bovine), this protein is Protein FAM162A (FAM162A).